A 733-amino-acid chain; its full sequence is Probable Rho-GTPase-activating protein 6 (733 aa).

Polar residues predominate over residues 116-125; it reads VFNESKSSSP. The tract at residues 116 to 135 is disordered; it reads VFNESKSSSPPDAHTDKYFT. Phosphothreonine is present on Thr-141. Residues 174 to 256 are disordered; the sequence is RFDKPSNNGP…SKGSWSSILR (83 aa). Low complexity predominate over residues 179–195; the sequence is SNNGPLGRSSLNLSSLS. Composition is skewed to polar residues over residues 196–218 and 225–240; these read HELQTSQDSPSLSATNQLSSSDT and PPSSFGSQRQFNASQD. A Rho-GAP domain is found at 312–546; it reads TNLCKFTFPT…GLIIHWPEVL (235 aa). Positions 692–713 are disordered; sequence PVTVTASSETNKKSQKINKKAS. Residues 704–713 are compositionally biased toward basic residues; the sequence is KSQKINKKAS.

This is Probable Rho-GTPase-activating protein 6 (rga6) from Schizosaccharomyces pombe (strain 972 / ATCC 24843) (Fission yeast).